The chain runs to 212 residues: ER lumen protein-retaining receptor (212 aa).

Topologically, residues methionine 1 to asparagine 2 are lumenal. Residues isoleucine 3–leucine 21 form a helical membrane-spanning segment. The Cytoplasmic segment spans residues lysine 22–lysine 35. A helical membrane pass occupies residues serine 36–threonine 53. Residues threonine 54–serine 61 lie on the Lumenal side of the membrane. The chain crosses the membrane as a helical span at residues valine 62–valine 80. The Cytoplasmic segment spans residues lysine 81–glutamate 96. The chain crosses the membrane as a helical span at residues phenylalanine 97–asparagine 110. Topologically, residues histidine 111–glutamate 117 are lumenal. The chain crosses the membrane as a helical span at residues valine 118 to leucine 137. The Cytoplasmic segment spans residues valine 138–serine 149. A helical transmembrane segment spans residues histidine 150–tyrosine 168. Over arginine 169–leucine 178 the chain is Lumenal. The chain crosses the membrane as a helical span at residues isoleucine 179–isoleucine 199. Over threonine 200–alanine 212 the chain is Cytoplasmic.

It belongs to the ERD2 family.

Its subcellular location is the endoplasmic reticulum membrane. Its function is as follows. Required for the retention of luminal endoplasmic reticulum proteins. Determines the specificity of the luminal ER protein retention system. Also required for normal vesicular traffic through the Golgi. The protein is ER lumen protein-retaining receptor (KdelR) of Drosophila melanogaster (Fruit fly).